The sequence spans 365 residues: Class I histocompatibility antigen, Gogo-A*0401 alpha chain (365 aa).

An N-terminal signal peptide occupies residues 1–24; the sequence is MAVMAPRTLVLLLSGALALTQTWA. The alpha-1 stretch occupies residues 25-114; it reads GSHSMRYFYT…LRGYYNQSED (90 aa). Topologically, residues 25–308 are extracellular; the sequence is GSHSMRYFYT…EPSSQPTIPI (284 aa). N110 carries an N-linked (GlcNAc...) asparagine glycan. Positions 115 to 206 are alpha-2; sequence GSHTIQRMYG…ENGKETLQLT (92 aa). 2 disulfides stabilise this stretch: C125-C188 and C227-C283. The interval 207 to 298 is alpha-3; sequence DAPKTHMTHH…GLPKPLTLRW (92 aa). The region spanning 209 to 295 is the Ig-like C1-type domain; sequence PKTHMTHHPV…QHEGLPKPLT (87 aa). A connecting peptide region spans residues 299–308; sequence EPSSQPTIPI. A helical transmembrane segment spans residues 309-332; it reads VGIIAGLVLFGAVIAGAVVAAVRW. Residues 333 to 365 are Cytoplasmic-facing; sequence RRKSSDRKGGSYSQAASSDSAQGSDVSLTACKV. The tract at residues 338 to 365 is disordered; sequence DRKGGSYSQAASSDSAQGSDVSLTACKV. Over residues 342-359 the composition is skewed to low complexity; that stretch reads GSYSQAASSDSAQGSDVS. A Phosphoserine modification is found at S343. Y344 is modified (phosphotyrosine). Phosphoserine is present on residues S345, S349, S350, S352, S356, and S359.

This sequence belongs to the MHC class I family. In terms of assembly, heterodimer of an alpha chain and a beta chain (beta-2-microglobulin).

It is found in the membrane. Its function is as follows. Involved in the presentation of foreign antigens to the immune system. This Gorilla gorilla gorilla (Western lowland gorilla) protein is Class I histocompatibility antigen, Gogo-A*0401 alpha chain.